The chain runs to 128 residues: Small nuclear ribonucleoprotein SmD3a (128 aa).

The region spanning 7-79 is the Sm domain; it reads IPVKLLHESS…VRFLVIPDML (73 aa). Residues 90–128 form a disordered region; it reads GKGKSASLGVGRGRGAAMRAKGTGRGTGGGRGAVPPVRR. A compositionally biased stretch (gly residues) spans 112 to 121; it reads TGRGTGGGRG.

Belongs to the snRNP core protein family. In terms of tissue distribution, expressed in young seedlings, roots, leaves, flowers and immature siliques.

It is found in the cytoplasm. It localises to the cytosol. The protein resides in the nucleus. Functionally, core component of the spliceosomal U1, U2, U4 and U5 small nuclear ribonucleoproteins (snRNPs), the building blocks of the spliceosome. May play a minor role in the splicing of cellular pre-mRNAs. This Arabidopsis thaliana (Mouse-ear cress) protein is Small nuclear ribonucleoprotein SmD3a.